A 293-amino-acid chain; its full sequence is ATP synthase gamma chain (293 aa).

This sequence belongs to the ATPase gamma chain family. F-type ATPases have 2 components, CF(1) - the catalytic core - and CF(0) - the membrane proton channel. CF(1) has five subunits: alpha(3), beta(3), gamma(1), delta(1), epsilon(1). CF(0) has three main subunits: a, b and c.

The protein localises to the cell inner membrane. In terms of biological role, produces ATP from ADP in the presence of a proton gradient across the membrane. The gamma chain is believed to be important in regulating ATPase activity and the flow of protons through the CF(0) complex. The sequence is that of ATP synthase gamma chain from Chlorobium chlorochromatii (strain CaD3).